A 210-amino-acid polypeptide reads, in one-letter code: MTTLETLKWDGKKSGKVSLDLAVAKETSSADLIHRAVLRQLANKRQGTASTLTRSEVRGGGRKPYKQKGTGRARQGSIRTPLRPGGGIIFGPKPRSYNLDMNRKERRLALRTALMSRVSDMKAVEDFGSTLKQPKTSDIINGLARLGIQKTEKVLVILDSPSDIIKKSINNIEKVKLIAADQLNVFDILNANKLVIGQSAIDKIQEVYAS.

The interval 46–85 (QGTASTLTRSEVRGGGRKPYKQKGTGRARQGSIRTPLRPG) is disordered. Over residues 60-71 (GGRKPYKQKGTG) the composition is skewed to basic residues.

The protein belongs to the universal ribosomal protein uL4 family. As to quaternary structure, part of the 50S ribosomal subunit.

One of the primary rRNA binding proteins, this protein initially binds near the 5'-end of the 23S rRNA. It is important during the early stages of 50S assembly. It makes multiple contacts with different domains of the 23S rRNA in the assembled 50S subunit and ribosome. Its function is as follows. Forms part of the polypeptide exit tunnel. This is Large ribosomal subunit protein uL4 from Prochlorococcus marinus (strain AS9601).